The primary structure comprises 994 residues: Cation-chloride cotransporter 2 (994 aa).

A disordered region spans residues M1 to R28. Residues M1 to L139 are Cytoplasmic-facing. A helical membrane pass occupies residues D140 to I160. Residues R161–S174 lie on the Extracellular side of the membrane. The chain crosses the membrane as a helical span at residues L175–I195. Over A196 to S221 the chain is Cytoplasmic. The helical transmembrane segment at I222–V242 threads the bilayer. Topologically, residues E243 to Q287 are extracellular. Residues N268 and N274 are each glycosylated (N-linked (GlcNAc...) asparagine). Residues V288–I308 traverse the membrane as a helical segment. Over N309–V311 the chain is Cytoplasmic. Residues A312 to I332 traverse the membrane as a helical segment. At A333–S372 the chain is on the extracellular side. N-linked (GlcNAc...) asparagine glycans are attached at residues N337, N353, and N370. Residues I373 to A393 form a helical membrane-spanning segment. Residues G394–T412 lie on the Cytoplasmic side of the membrane. Residues L413–L433 traverse the membrane as a helical segment. The Extracellular portion of the chain corresponds to S434 to A448. Residues V449–A469 traverse the membrane as a helical segment. Residues L470–V505 lie on the Cytoplasmic side of the membrane. The helical transmembrane segment at A506–I526 threads the bilayer. Residues T527–T529 lie on the Extracellular side of the membrane. Residues I530–D552 traverse the membrane as a helical segment. Over A553 to P558 the chain is Cytoplasmic. Residues R559–M579 traverse the membrane as a helical segment. At F580–T585 the chain is on the extracellular side. Residues F586–K606 form a helical membrane-spanning segment. Topologically, residues A607–T994 are cytoplasmic.

Belongs to the SLC12A transporter family.

It is found in the membrane. Probable cation/chloride cotransporter. The polypeptide is Cation-chloride cotransporter 2 (CCC2) (Oryza sativa subsp. japonica (Rice)).